A 669-amino-acid polypeptide reads, in one-letter code: DNA mismatch repair protein MutL (669 aa).

Over residues Phe356–Ser371 the composition is skewed to basic and acidic residues. The disordered stretch occupies residues Phe356–Pro379.

The protein belongs to the DNA mismatch repair MutL/HexB family.

This protein is involved in the repair of mismatches in DNA. It is required for dam-dependent methyl-directed DNA mismatch repair. May act as a 'molecular matchmaker', a protein that promotes the formation of a stable complex between two or more DNA-binding proteins in an ATP-dependent manner without itself being part of a final effector complex. This is DNA mismatch repair protein MutL from Staphylococcus aureus (strain MRSA252).